The primary structure comprises 387 residues: DNA double-strand break repair protein Mre11 (387 aa).

Residues D9, H11, D50, and N85 each coordinate Mn(2+). H86 serves as the catalytic Proton donor. H150, D181, and H183 together coordinate Mn(2+). The interval 365 to 387 (AVLDDDADAADDDGRPTTVEEFQ) is disordered. The segment covering 366–375 (VLDDDADAAD) has biased composition (acidic residues).

It belongs to the MRE11/RAD32 family. Homodimer. Forms a heterotetramer composed of two Mre11 subunits and two Rad50 subunits. The cofactor is Mn(2+).

Nuclease activity is regulated by Rad50. Functionally, part of the Rad50/Mre11 complex, which is involved in the early steps of DNA double-strand break (DSB) repair. Mre11 binds to DSB ends and has both double-stranded 3'-5' exonuclease activity and single-stranded endonuclease activity. This chain is DNA double-strand break repair protein Mre11, found in Halobacterium salinarum (strain ATCC 700922 / JCM 11081 / NRC-1) (Halobacterium halobium).